Here is a 199-residue protein sequence, read N- to C-terminus: Pectinesterase inhibitor 4 (199 aa).

The N-terminal stretch at 1–25 (MLRFVVLSLTLMVFINSSNFPKTAA) is a signal peptide. N-linked (GlcNAc...) asparagine glycans are attached at residues N16, N33, N43, and N83. Cysteines 42 and 51 form a disulfide. A disulfide bridge links C109 with C158.

Belongs to the PMEI family. In terms of assembly, binds reversibly to PME3 to inhibit its activity; the stability of the PME3-PMEI4 complex and the inhibition of the pectin methylesterase (PME) activity is pH-dependent, based on protonation status of amino-acids at the complex interface. Expressed in outer cell layer of roots, particularly in the root-hair zone. Expressed in roots and siliques.

It is found in the secreted. The protein resides in the extracellular space. The protein localises to the apoplast. Pectin methylesterase (PME) inhibitor that can target the root-expressed PME17 and PME3 in a pH-dependent manner, mainly in slightly acidic conditions (pH 6.3 and 5.0) but not at pH 7.5; this processus relies on changes in the protonation of amino acids involved in intermolecular and intramolecular interactions. Regulate de-methylesterification of pectins in roots and affects root growth. This Arabidopsis thaliana (Mouse-ear cress) protein is Pectinesterase inhibitor 4.